The following is a 605-amino-acid chain: Kelch-like protein 26 (605 aa).

Residues 53–120 (LDVVLAIDNE…AYSSEVTLDL (68 aa)) form the BTB domain. The 102-residue stretch at 155 to 256 (CLNIGQMATT…RSSELVDSVQ (102 aa)) folds into the BACK domain. Kelch repeat units lie at residues 300–351 (SLIT…VLDN), 352–403 (FVYV…VLDG), 404–450 (QLYA…TCGD), 452–498 (LYIS…SANN), 499–549 (RIYA…LLDK), and 551–598 (IYIV…PIIL).

Its function is as follows. May play a role in endo(sarco)plasmic reticulum (ER/SR) mitochondrial signaling. May be part of the ubiquitin-proteasome system (UPS) and affect ubiquitination and degradation of target substrates. This Danio rerio (Zebrafish) protein is Kelch-like protein 26 (klhl26).